The following is a 452-amino-acid chain: tRNA modification GTPase MnmE (452 aa).

3 residues coordinate (6S)-5-formyl-5,6,7,8-tetrahydrofolate: arginine 24, glutamate 81, and arginine 120. The 158-residue stretch at 216–373 (GIKTVIVGAP…LFGAIGRWAD (158 aa)) folds into the TrmE-type G domain. GTP is bound by residues 226 to 231 (NVGKSS), 245 to 251 (SAEPGTT), and 270 to 273 (DTAG). 2 residues coordinate Mg(2+): serine 230 and threonine 251. Lysine 452 is a (6S)-5-formyl-5,6,7,8-tetrahydrofolate binding site.

Belongs to the TRAFAC class TrmE-Era-EngA-EngB-Septin-like GTPase superfamily. TrmE GTPase family. As to quaternary structure, homodimer. Heterotetramer of two MnmE and two MnmG subunits. The cofactor is K(+).

It localises to the cytoplasm. Functionally, exhibits a very high intrinsic GTPase hydrolysis rate. Involved in the addition of a carboxymethylaminomethyl (cmnm) group at the wobble position (U34) of certain tRNAs, forming tRNA-cmnm(5)s(2)U34. The chain is tRNA modification GTPase MnmE from Opitutus terrae (strain DSM 11246 / JCM 15787 / PB90-1).